The sequence spans 486 residues: MTKITRVGSASPPDGGWGWMIVAGCFLVTICTRAVTRCISIFFVEFQTYFAQDYSQTAWIHSIVDCMTMLCAPLGSVVSNQLSCQAGIMLGGLLASTGLILGSFATSLKHLYLSLGVLTGLGFALCYSPAIAMVGKYFSRRKAFAYGIAMSGSGIGTFILAPVVQLLIEQFSWRGALLILGGFVLNLCVCGALMRPITLKEDPSGPEKSHDRDAQREDCKQASPYSPLTKEWTETRLCCSLQQGYGFLLMSDFVVLAVSVLFMAYGCSPLFVYLVPYALSVGVSHHQAAFLMSILGVIDIVGNITFGWLTDRRCLKNYRYVCYLFAVALDGLCYLCLPMLQSFPLLVPFSCTFGYFDGAYVTLIPVVTAEIVGTTSLSSALGVVYFLHAVPYLVSPPIAGWLVDTTGSYTAAFLLCGFAMIFSSILLGFAKIAKRMKRTQVPFLVKDSDPKLHLWTNGSVAYSIAKELDQKDEESLAKARTGCNLT.

At 1–9 (MTKITRVGS) the chain is on the cytoplasmic side. The next 6 helical transmembrane spans lie at 10–30 (ASPP…LVTI), 58–78 (AWIH…GSVV), 86–106 (AGIM…SFAT), 115–135 (LGVL…AMVG), 148–168 (IAMS…QLLI), and 177–197 (LLIL…MRPI). A compositionally biased stretch (basic and acidic residues) spans 201 to 220 (EDPSGPEKSHDRDAQREDCK). Residues 201 to 221 (EDPSGPEKSHDRDAQREDCKQ) form a disordered region. Helical transmembrane passes span 253-273 (FVVL…LFVY), 289-309 (AFLM…FGWL), 320-340 (YVCY…LPML), 353-373 (FGYF…EIVG), 383-403 (VVYF…GWLV), and 410-430 (TAAF…LGFA). Residues 431 to 486 (KIAKRMKRTQVPFLVKDSDPKLHLWTNGSVAYSIAKELDQKDEESLAKARTGCNLT) are Cytoplasmic-facing.

This sequence belongs to the major facilitator superfamily. Monocarboxylate porter (TC 2.A.1.13) family. As to quaternary structure, interacts with isoform 2 of BSG; this interaction is required for its localization to the plasma membrane. Detected in kidney, choroid plexus, testis, lung, stomach, large and small intestine, spleen, fat and parotid gland. In eye, expressed in cornea, ciliary epithelium, lens epithelium and lens fiber.

It is found in the cell membrane. The protein localises to the basolateral cell membrane. It catalyses the reaction creatine(in) = creatine(out). It carries out the reaction guanidinoacetate(in) = guanidinoacetate(out). Its activity is regulated as follows. Creatine uptake is inhibited by carbonyl cyanide 3-chlorophenylhydrazone (CCCP) and by valinomycin. Its function is as follows. Functions as a transporter for creatine and as well for its precursor guanidinoacetate. Transport of creatine and GAA is independent of resting membrane potential and extracellular Na(+), Cl(-), or pH. Contributes to the process of creatine biosynthesis and distribution. The chain is Monocarboxylate transporter 12 from Rattus norvegicus (Rat).